The chain runs to 502 residues: MSSSPHTHTLIIMERLSEVRLYSSPMTSVLNSNLSSCLTNAFIPDTVRMASSPLLAWMTLVVIGTLAPVSVFSCLSLKRSVKELLTERSSKLDVLDIFRFVAILWVMLNHTGSEGRIDILDRLPSADAFKSAMHDHPIFGALMGNSALGVEIFLVLSGLLAARSWLRKADEPFFQHWKSFIARRLLRLAPSMFIFVYIAAGPIMNALLPRYSSSMVSACGFWGILSHVTFTSNWQSTPTCMGYLWYLGLDMQLYMVAPIFLNLLHKFPKRGMALTITTIIASMVIRAGYCTAYGTCNQSDVDIPFISYPGQDAETLKSIYAGLWDMYSRPYTKCGPFLIGLLLGYITVSSKYIMVSTTSKTLFRSSLIVAIATIYAILPEYWNPNAGNTLYNTVYTAVFRSVFAMAISGMIAALYFRQEYRPTNPIFAMLAKLTYNAYLLHMPVVYIFNWLPFLQAATSPIHLLLVLPFVAILSFIAALIFYLFIEAPIGHLTSQYATRLGL.

The next 11 membrane-spanning stretches (helical) occupy residues 54 to 74, 92 to 112, 138 to 158, 188 to 208, 241 to 261, 272 to 292, 335 to 355, 367 to 387, 396 to 416, 437 to 457, and 465 to 485; these read LLAW…VFSC, LDVL…NHTG, IFGA…VLSG, LAPS…NALL, MGYL…PIFL, MALT…YCTA, GPFL…YIMV, LIVA…PNAG, TAVF…ALYF, AYLL…LQAA, and LVLP…YLFI.

Expressed in intestine, some sensory neurons in the head, body wall muscles and socket cells.

The protein localises to the endoplasmic reticulum membrane. Functionally, involved in the response to variation in environmental oxygen levels by inhibiting hif-1-mediated gene transcription in a vhl-1-independent manner. Plays a role in susceptibility to killing mediated by P.aeruginosa and by pore-forming toxins produced by B.thuringiensis. Probably by preventing hif-1 transcriptional activity, regulates behavioral responses, such as locomotion speed following acute reoxygenation. Plays a role in normal egg-laying probably by regulating spermatogenesis and in body morphogenesis. This Caenorhabditis elegans protein is Regulator of hypoxia-inducible factor 1.